The following is a 798-amino-acid chain: Serine/threonine-protein kinase haspin (798 aa).

Residues 1 to 110 are disordered; sequence MAASLPGPGS…WKLRARPSLT (110 aa). Ser58 is subject to Phosphoserine. Over residues 59–70 the composition is skewed to acidic residues; the sequence is QSDDPDDPDDPD. A Phosphoserine; by AURKB modification is found at Ser93. Thr97 carries the post-translational modification Phosphothreonine. Ser143 is modified (phosphoserine; by AURKB). Position 147 is a phosphoserine (Ser147). The disordered stretch occupies residues 275–350; sequence LVVGNGPEGP…KHQEATETSL (76 aa). Basic and acidic residues predominate over residues 300–315; the sequence is CQERGLQEAVRREHQE. The Protein kinase domain maps to 484–798; that stretch reads LQRCEKIGEG…DLLCQHSLFK (315 aa). Residues 490 to 498, Lys511, 606 to 611, 649 to 654, and 687 to 689 contribute to the ATP site; these read IGEGVFGEV, EFGGID, DLHWGN, and DYT. The active-site Proton acceptor is the Asp649.

The protein belongs to the protein kinase superfamily. Ser/Thr protein kinase family. Haspin subfamily. The cofactor is Mg(2+). Post-translationally, autophosphorylated on both serine and threonine residues. Strongly phosphorylated during mitosis but this does not appear to significantly affect its intrinsic kinase activity. Phosphorylation by AURKB is required for full activity toward histone H3 at 'Ser-3' in mitosis. As to expression, strongly expressed in testis. Also present in thymus and bone marrow and low levels observed in prostate, intestine, lung, spleen and lymph node. Expressed in fetal skin, liver, kidney and small intestine and also in proliferating but not non-proliferating cell lines.

The protein resides in the nucleus. Its subcellular location is the chromosome. It localises to the cytoplasm. The protein localises to the cytoskeleton. It is found in the spindle. The enzyme catalyses L-seryl-[protein] + ATP = O-phospho-L-seryl-[protein] + ADP + H(+). It catalyses the reaction L-threonyl-[protein] + ATP = O-phospho-L-threonyl-[protein] + ADP + H(+). With respect to regulation, constitutive activity that does not require phosphorylation. Specifically inhibited by 3-(1H-indazol-5-yl)-N-propylimidazo[1,2-b]pyridazin-6-amine (CHR-6494). Functionally, serine/threonine-protein kinase that phosphorylates histone H3 at 'Thr-3' (H3T3ph) during mitosis. May act through H3T3ph to both position and modulate activation of AURKB and other components of the chromosomal passenger complex (CPC) at centromeres to ensure proper chromatid cohesion, metaphase alignment and normal progression through the cell cycle. This chain is Serine/threonine-protein kinase haspin, found in Homo sapiens (Human).